Here is a 628-residue protein sequence, read N- to C-terminus: EF-hand calcium-binding domain-containing protein 7 (628 aa).

A compositionally biased stretch (polar residues) spans 1–22 (MASNPGSDAALGTQNPLLSGSP). Residues 1-24 (MASNPGSDAALGTQNPLLSGSPRT) form a disordered region. EF-hand domains are found at residues 102–137 (TSKA…RGEK) and 138–173 (MTQE…TSEQ). A disordered region spans residues 192-231 (QFGSHMEGSPERGPSPAPKPSPRVIRKNDQETFSSKGDTS). Phosphoserine is present on residues Ser200 and Ser212. Residues 222-231 (ETFSSKGDTS) are compositionally biased toward polar residues. Residues 402 to 437 (EFRSTLSEIFEVIDLDGNGLISLEEYNFFELRTSGE) enclose the EF-hand 3 domain. Ca(2+) contacts are provided by Asp415, Asp417, Asn419, and Glu426.

As to quaternary structure, component of the EvC complex composed of EFCAB7, IQCE, EVC2 and EVC; built from two subcomplexes, EVC2:EVC and EFCAB7:IQCE. Interacts (via EF-hand 1 and 2) with IQCE (via N-terminus); this interaction anchors the EVC-EVC2 complex in a signaling microdomain at the base of cilia and stimulates the Hedgehog (Hh) pathway. Interacts with EVC2 (via N-terminal end). Interacts with EVC.

The protein resides in the cell projection. It localises to the cilium membrane. In terms of biological role, component of the EvC complex that positively regulates ciliary Hedgehog (Hh) signaling. Required for the localization of the EVC2:EVC subcomplex at the base of primary cilia. The chain is EF-hand calcium-binding domain-containing protein 7 (Efcab7) from Mus musculus (Mouse).